We begin with the raw amino-acid sequence, 174 residues long: Shikimate kinase 2 (174 aa).

12 to 17 lines the ATP pocket; that stretch reads GCGKTT. The Mg(2+) site is built by Thr16 and Asp32. Asp34, Arg58, and Gly79 together coordinate substrate. Residues 112–126 form an LID domain region; sequence QAAPEEDLRPTLTGK. Arg120 contributes to the ATP binding site. Residue Arg139 participates in substrate binding.

This sequence belongs to the shikimate kinase family. AroL subfamily. In terms of assembly, monomer. It depends on Mg(2+) as a cofactor.

The protein localises to the cytoplasm. It carries out the reaction shikimate + ATP = 3-phosphoshikimate + ADP + H(+). It functions in the pathway metabolic intermediate biosynthesis; chorismate biosynthesis; chorismate from D-erythrose 4-phosphate and phosphoenolpyruvate: step 5/7. In terms of biological role, catalyzes the specific phosphorylation of the 3-hydroxyl group of shikimic acid using ATP as a cosubstrate. This Escherichia coli O7:K1 (strain IAI39 / ExPEC) protein is Shikimate kinase 2.